A 211-amino-acid polypeptide reads, in one-letter code: UPF0056 membrane protein YvbG (211 aa).

The next 6 membrane-spanning stretches (helical) occupy residues 1-21 (MMFSFIVHVFISLFAVSNPIG), 47-67 (ILSFFILAAFLVFGHLIFKLF), 69-89 (INIHALRVAGGIFIFGIAYNL), 114-134 (ISVTPLSIPIIAGPGTIATVM), 150-170 (MIGIAAVIALTFLFFHYSAFI), and 188-208 (LILAVVAVGMIGAGLKGMFPV).

The protein belongs to the UPF0056 (MarC) family.

The protein resides in the cell membrane. This Bacillus subtilis (strain 168) protein is UPF0056 membrane protein YvbG (yvbG).